The sequence spans 349 residues: Glycerol-3-phosphate dehydrogenase [NAD(+)], cytoplasmic (349 aa).

NAD(+)-binding positions include 10-15 (GSGDWG), Lys-120, and Ala-153. Lys-120 serves as a coordination point for substrate. Residue Ser-154 is modified to Phosphoserine. Catalysis depends on Lys-204, which acts as the Proton acceptor. Residue Arg-269 participates in NAD(+) binding. Residue 269 to 270 (RN) participates in substrate binding. Lys-289 bears the N6-succinyllysine mark. The NAD(+) site is built by Lys-296 and Gln-298. Residue Tyr-326 is modified to Phosphotyrosine.

This sequence belongs to the NAD-dependent glycerol-3-phosphate dehydrogenase family. Homodimer.

It localises to the cytoplasm. The enzyme catalyses sn-glycerol 3-phosphate + NAD(+) = dihydroxyacetone phosphate + NADH + H(+). Has glycerol-3-phosphate dehydrogenase activity. In Oryctolagus cuniculus (Rabbit), this protein is Glycerol-3-phosphate dehydrogenase [NAD(+)], cytoplasmic (GPD1).